A 67-amino-acid polypeptide reads, in one-letter code: DNA gyrase inhibitor YacG (67 aa).

Positions 9, 12, 28, and 32 each coordinate Zn(2+). The interval 48-67 is disordered; sequence PVSPDAEDELFSEELPPRAH.

Belongs to the DNA gyrase inhibitor YacG family. In terms of assembly, interacts with GyrB. It depends on Zn(2+) as a cofactor.

Inhibits all the catalytic activities of DNA gyrase by preventing its interaction with DNA. Acts by binding directly to the C-terminal domain of GyrB, which probably disrupts DNA binding by the gyrase. The chain is DNA gyrase inhibitor YacG from Pseudomonas fluorescens (strain ATCC BAA-477 / NRRL B-23932 / Pf-5).